Here is a 355-residue protein sequence, read N- to C-terminus: UDP-N-acetylglucosamine--N-acetylmuramyl-(pentapeptide) pyrophosphoryl-undecaprenol N-acetylglucosamine transferase (355 aa).

UDP-N-acetyl-alpha-D-glucosamine contacts are provided by residues 14 to 16, Asn126, Arg162, Ser190, Ile243, 262 to 267, and Gln287; these read TGG and ALTVSE.

This sequence belongs to the glycosyltransferase 28 family. MurG subfamily.

It is found in the cell inner membrane. It carries out the reaction di-trans,octa-cis-undecaprenyl diphospho-N-acetyl-alpha-D-muramoyl-L-alanyl-D-glutamyl-meso-2,6-diaminopimeloyl-D-alanyl-D-alanine + UDP-N-acetyl-alpha-D-glucosamine = di-trans,octa-cis-undecaprenyl diphospho-[N-acetyl-alpha-D-glucosaminyl-(1-&gt;4)]-N-acetyl-alpha-D-muramoyl-L-alanyl-D-glutamyl-meso-2,6-diaminopimeloyl-D-alanyl-D-alanine + UDP + H(+). Its pathway is cell wall biogenesis; peptidoglycan biosynthesis. Functionally, cell wall formation. Catalyzes the transfer of a GlcNAc subunit on undecaprenyl-pyrophosphoryl-MurNAc-pentapeptide (lipid intermediate I) to form undecaprenyl-pyrophosphoryl-MurNAc-(pentapeptide)GlcNAc (lipid intermediate II). This chain is UDP-N-acetylglucosamine--N-acetylmuramyl-(pentapeptide) pyrophosphoryl-undecaprenol N-acetylglucosamine transferase, found in Vibrio parahaemolyticus serotype O3:K6 (strain RIMD 2210633).